A 216-amino-acid chain; its full sequence is Pyridoxine/pyridoxamine 5'-phosphate oxidase (216 aa).

FMN-binding positions include 63–68 (RMVLMK), 78–79 (YS), lysine 85, and glutamine 107. Lysine 68 lines the substrate pocket. The substrate site is built by tyrosine 125 and arginine 129. Residues 142 to 143 (QS) and tryptophan 187 each bind FMN. Residue 193–195 (RLH) coordinates substrate. Arginine 197 contributes to the FMN binding site.

It belongs to the pyridoxamine 5'-phosphate oxidase family. In terms of assembly, homodimer. The cofactor is FMN.

It catalyses the reaction pyridoxamine 5'-phosphate + O2 + H2O = pyridoxal 5'-phosphate + H2O2 + NH4(+). It carries out the reaction pyridoxine 5'-phosphate + O2 = pyridoxal 5'-phosphate + H2O2. It functions in the pathway cofactor metabolism; pyridoxal 5'-phosphate salvage; pyridoxal 5'-phosphate from pyridoxamine 5'-phosphate: step 1/1. The protein operates within cofactor metabolism; pyridoxal 5'-phosphate salvage; pyridoxal 5'-phosphate from pyridoxine 5'-phosphate: step 1/1. Its function is as follows. Catalyzes the oxidation of either pyridoxine 5'-phosphate (PNP) or pyridoxamine 5'-phosphate (PMP) into pyridoxal 5'-phosphate (PLP). In Bradyrhizobium sp. (strain BTAi1 / ATCC BAA-1182), this protein is Pyridoxine/pyridoxamine 5'-phosphate oxidase.